Consider the following 427-residue polypeptide: Glutamate-1-semialdehyde 2,1-aminomutase (427 aa).

The residue at position 265 (Lys-265) is an N6-(pyridoxal phosphate)lysine.

The protein belongs to the class-III pyridoxal-phosphate-dependent aminotransferase family. HemL subfamily. In terms of assembly, homodimer. It depends on pyridoxal 5'-phosphate as a cofactor.

It localises to the cytoplasm. It catalyses the reaction (S)-4-amino-5-oxopentanoate = 5-aminolevulinate. It participates in porphyrin-containing compound metabolism; protoporphyrin-IX biosynthesis; 5-aminolevulinate from L-glutamyl-tRNA(Glu): step 2/2. This chain is Glutamate-1-semialdehyde 2,1-aminomutase, found in Burkholderia vietnamiensis (strain G4 / LMG 22486) (Burkholderia cepacia (strain R1808)).